The chain runs to 256 residues: Sec-independent protein translocase protein TatC (256 aa).

6 helical membrane passes run 25–45 (VICV…IYHF), 77–97 (AIVA…AFIA), 117–137 (ILFY…VFSF), 158–178 (FALA…AIIL), 195–215 (PYII…DVFS), and 217–237 (TLLA…ARFY).

This sequence belongs to the TatC family. In terms of assembly, the Tat system comprises two distinct complexes: a TatABC complex, containing multiple copies of TatA, TatB and TatC subunits, and a separate TatA complex, containing only TatA subunits. Substrates initially bind to the TatABC complex, which probably triggers association of the separate TatA complex to form the active translocon.

It localises to the cell inner membrane. Functionally, part of the twin-arginine translocation (Tat) system that transports large folded proteins containing a characteristic twin-arginine motif in their signal peptide across membranes. Together with TatB, TatC is part of a receptor directly interacting with Tat signal peptides. The protein is Sec-independent protein translocase protein TatC of Haemophilus influenzae (strain ATCC 51907 / DSM 11121 / KW20 / Rd).